The chain runs to 70 residues: Conotoxin Vc6.10 (70 aa).

A signal peptide spans 1–19 (MEKLTILLLVAAVLTSTQA). The propeptide occupies 20-40 (LIQGGADERQKAKINFLSRSD). Cystine bridges form between cysteine 43–cysteine 57, cysteine 50–cysteine 62, and cysteine 56–cysteine 69.

It belongs to the conotoxin O2 superfamily. In terms of tissue distribution, expressed by the venom duct.

Its subcellular location is the secreted. Inhibits voltage-gated ion channels. In Conus victoriae (Queen Victoria cone), this protein is Conotoxin Vc6.10.